Consider the following 521-residue polypeptide: Importin subunit alpha-3 (521 aa).

N-acetylalanine is present on alanine 2. In terms of domain architecture, IBB spans 2-58 (ADNEKLDNQRLKNFKNKGRDLETMRRQRNEVVVELRKNKRDEHLLKRRNVPQEDICE). Positions 43-52 (EHLLKRRNVP) match the Nuclear localization signal motif. Position 60 is a phosphoserine (serine 60). Residues 66–106 (YRVQNTSLEAIVQNASSDNQGIQLSAVQAARKLLSSDRNPP) form an ARM 1; truncated repeat. 8 ARM repeats span residues 107–149 (IDDL…TSEQ), 150–194 (TQAV…CRDY), 195–233 (VISL…HKDP), 234–278 (PPPM…EQIQ), 279–318 (MVID…TDEQ), 319–360 (TQVV…NQQQ), 361–400 (VQAV…ISGR), and 401–443 (KDQV…KMAE). An NLS binding site (major) region spans residues 137–229 (WALTNIASGT…VTWVMVNLCR (93 aa)). The interval 306-394 (RAVGNIVTGT…QKEAAWAISN (89 aa)) is NLS binding site (minor). The stretch at 447 to 485 (ETIANLIEECGGLEKIEQLQNHENEDIYKLAYEIIDQFF) is one ARM 10; atypical repeat.

It belongs to the importin alpha family. In terms of assembly, forms a complex with importin subunit beta-1 (KPNB1). Interacts with SNAI1. Interacts with TALDO1 isoform 1. Interacts with CYB1. Detected more or less in all tissues examined (Ehrlich ascites tumor cells, testis, kidney, spleen, liver, heart, lung, thymus, skeletal muscle, cerebellum and brain (without cerebellum)). Multiple-sized transcripts were highly expressed, especially in testis.

It localises to the cytoplasm. The protein resides in the nucleus. In terms of biological role, functions in nuclear protein import as an adapter protein for nuclear receptor KPNB1. Binds specifically and directly to substrates containing either a simple or bipartite NLS motif. Docking of the importin/substrate complex to the nuclear pore complex (NPC) is mediated by KPNB1 through binding to nucleoporin FxFG repeats and the complex is subsequently translocated through the pore by an energy requiring, Ran-dependent mechanism. At the nucleoplasmic side of the NPC, Ran binds to importin-beta and the three components separate and importin-alpha and -beta are re-exported from the nucleus to the cytoplasm where GTP hydrolysis releases Ran from importin. The directionality of nuclear import is thought to be conferred by an asymmetric distribution of the GTP- and GDP-bound forms of Ran between the cytoplasm and nucleus. Mediates nuclear import of AARS1, MRTFA and RANBP3. The chain is Importin subunit alpha-3 (Kpna4) from Mus musculus (Mouse).